Consider the following 270-residue polypeptide: Phosphatidylglycerol--prolipoprotein diacylglyceryl transferase (270 aa).

7 consecutive transmembrane segments (helical) span residues 10–30 (VALAIGPLKIHWYGLMYLIGI), 56–76 (LIFWLSMGVIVGGRLGYVLFY), 92–112 (WKGGMAFHGGFIGVMIAAWWF), 120–140 (FFQLMDFVAPMVPIGLGAGRI), 174–194 (PSQLYQFALEGVALFLILYIF), 202–222 (MAVSGMFALFYGIFRFVVEFV), and 236–256 (WVTMGQILSLPMILGGLGLLW). A 1,2-diacyl-sn-glycero-3-phospho-(1'-sn-glycerol) is bound at residue Arg139.

Belongs to the Lgt family.

Its subcellular location is the cell inner membrane. The enzyme catalyses L-cysteinyl-[prolipoprotein] + a 1,2-diacyl-sn-glycero-3-phospho-(1'-sn-glycerol) = an S-1,2-diacyl-sn-glyceryl-L-cysteinyl-[prolipoprotein] + sn-glycerol 1-phosphate + H(+). Its pathway is protein modification; lipoprotein biosynthesis (diacylglyceryl transfer). Functionally, catalyzes the transfer of the diacylglyceryl group from phosphatidylglycerol to the sulfhydryl group of the N-terminal cysteine of a prolipoprotein, the first step in the formation of mature lipoproteins. The sequence is that of Phosphatidylglycerol--prolipoprotein diacylglyceryl transferase from Pseudomonas fluorescens (strain SBW25).